Here is a 203-residue protein sequence, read N- to C-terminus: ER membrane protein complex subunit 8/9 homolog (203 aa).

Residues 4–140 (YKVSERAYAK…IQVFNCPGDS (137 aa)) form the MPN domain.

Belongs to the EMC8/EMC9 family. Component of the ER membrane protein complex (EMC).

It localises to the endoplasmic reticulum membrane. Its function is as follows. Part of the endoplasmic reticulum membrane protein complex (EMC) that enables the energy-independent insertion into endoplasmic reticulum membranes of newly synthesized multi-pass membrane proteins like rhodopsins. The polypeptide is ER membrane protein complex subunit 8/9 homolog (Drosophila melanogaster (Fruit fly)).